A 367-amino-acid polypeptide reads, in one-letter code: Fructose-1,6-bisphosphatase class 1 3 (367 aa).

It belongs to the FBPase class 1 family. In terms of assembly, homotetramer.

It is found in the cytoplasm. It catalyses the reaction beta-D-fructose 1,6-bisphosphate + H2O = beta-D-fructose 6-phosphate + phosphate. It participates in carbohydrate biosynthesis; gluconeogenesis. This Paraburkholderia phymatum (strain DSM 17167 / CIP 108236 / LMG 21445 / STM815) (Burkholderia phymatum) protein is Fructose-1,6-bisphosphatase class 1 3.